Consider the following 465-residue polypeptide: MAAVDSVAQALAYLQVHSPQDGTSMYDHLVKLVSKVLEDQPKNAVDLLETSLLVKKSTFDPKESSPLVPIPVAPDATQTQAAVSIFGDPELPINPATGEPVPADPPNEFEAENMLGAAAVLDCLGVGLGRELGVNIALAAKRIGEDPKLAVRSVRFFGKFLGLYSDYFVFEVAFKKEAAKEAAPAAPAPERVEGEAASSSAPEVPVEEPGKGANKFTYLVCSSLGGPLTRLPDVTPAQVKASRRIKKLLTGRLTSHVSTYPAFPGNEANYLRALIARISAATVVAPSDLFSLNDETGELERAEDWEPPAGREMAAPTAWVHVRPHLKSQGRCEVHKRELPEDADEDEFYNEDELEEGPDLLAALEEDAQLPGEQAAWTPIYSSASEAVKTQAGGLRSLVWPGAVCGGRGSEWTCVYVGWGVKNAPFVPLPPPPVAQEFAWGEVETQELELKPAPPPPEEEAEADE.

Disordered stretches follow at residues 184-209 and 445-465; these read PAAP…VEEP and TQEL…EADE.

This sequence belongs to the flagellar radial spoke RSP4/6 family. As to quaternary structure, the radial spoke head is made of five different polypeptides (RSP1, RSP4, RSP6, RSP9, and RSP10).

Its subcellular location is the cytoplasm. The protein resides in the cytoskeleton. It localises to the flagellum axoneme. Flagellar radial spokes contribute to the regulation of dynein arm activity and thus the pattern of flagellar bending. They consist of a thin stalk, which is attached to the a subfiber of the outer doublet microtubule, and a bulbous head, which is attached to the stalk and appears to interact with the projections from the central pair of microtubules. The polypeptide is Flagellar radial spoke protein 4 (RSP4) (Chlamydomonas reinhardtii (Chlamydomonas smithii)).